We begin with the raw amino-acid sequence, 123 residues long: UPF0102 protein Dole_2298 (123 aa).

It belongs to the UPF0102 family.

The polypeptide is UPF0102 protein Dole_2298 (Desulfosudis oleivorans (strain DSM 6200 / JCM 39069 / Hxd3) (Desulfococcus oleovorans)).